Here is a 109-residue protein sequence, read N- to C-terminus: Large ribosomal subunit protein uL22 (109 aa).

The protein belongs to the universal ribosomal protein uL22 family. In terms of assembly, part of the 50S ribosomal subunit.

In terms of biological role, this protein binds specifically to 23S rRNA; its binding is stimulated by other ribosomal proteins, e.g. L4, L17, and L20. It is important during the early stages of 50S assembly. It makes multiple contacts with different domains of the 23S rRNA in the assembled 50S subunit and ribosome. Functionally, the globular domain of the protein is located near the polypeptide exit tunnel on the outside of the subunit, while an extended beta-hairpin is found that lines the wall of the exit tunnel in the center of the 70S ribosome. The protein is Large ribosomal subunit protein uL22 of Dechloromonas aromatica (strain RCB).